Here is a 140-residue protein sequence, read N- to C-terminus: T cell receptor alpha chain constant (140 aa).

An Ig-like C1-type domain is found at Lys-19 to Thr-107. Cys-22 and Cys-72 are oxidised to a cystine. 4 N-linked (GlcNAc...) asparagine glycosylation sites follow: Asn-32, Asn-66, Asn-77, and Asn-113. Residues Cys-94–Ser-115 form a connecting peptide region. Residues Val-116 to Trp-138 traverse the membrane as a helical segment. Residues Ser-139 to Ser-140 lie on the Cytoplasmic side of the membrane.

Alpha-beta TR is a heterodimer composed of an alpha and beta chain; disulfide-linked. The alpha-beta TR is associated with the transmembrane signaling CD3 coreceptor proteins to form the TR-CD3 (TcR or TCR). The assembly of alpha-beta TR heterodimers with CD3 occurs in the endoplasmic reticulum where a single alpha-beta TR heterodimer associates with one CD3D-CD3E heterodimer, one CD3G-CD3E heterodimer and one CD247 homodimer forming a stable octameric structure. CD3D-CD3E and CD3G-CD3E heterodimers preferentially associate with TR alpha and TR beta chains, respectively. The association of the CD247 homodimer is the last step of TcR assembly in the endoplasmic reticulum and is required for transport to the cell surface.

The protein resides in the cell membrane. In terms of biological role, constant region of T cell receptor (TR) alpha chain. Alpha-beta T cell receptors are antigen specific receptors which are essential to the immune response and are present on the cell surface of T lymphocytes. Recognize peptide-major histocompatibility (MH) (pMH) complexes that are displayed by antigen presenting cells (APC), a prerequisite for efficient T cell adaptive immunity against pathogens. Binding of alpha-beta TR to pMH complex initiates TR-CD3 clustering on the cell surface and intracellular activation of LCK that phosphorylates the ITAM motifs of CD3G, CD3D, CD3E and CD247 enabling the recruitment of ZAP70. In turn, ZAP70 phosphorylates LAT, which recruits numerous signaling molecules to form the LAT signalosome. The LAT signalosome propagates signal branching to three major signaling pathways, the calcium, the mitogen-activated protein kinase (MAPK) kinase and the nuclear factor NF-kappa-B (NF-kB) pathways, leading to the mobilization of transcription factors that are critical for gene expression and essential for T cell growth and differentiation. The T cell repertoire is generated in the thymus, by V-(D)-J rearrangement. This repertoire is then shaped by intrathymic selection events to generate a peripheral T cell pool of self-MH restricted, non-autoaggressive T cells. Post-thymic interaction of alpha-beta TR with the pMH complexes shapes TR structural and functional avidity. The chain is T cell receptor alpha chain constant from Homo sapiens (Human).